The primary structure comprises 751 residues: Catalase-peroxidase (751 aa).

An N-terminal signal peptide occupies residues 1-12; that stretch reads MSNETKCPFSHA. A cross-link (tryptophyl-tyrosyl-methioninium (Trp-Tyr) (with M-267)) is located at residues 91–241; sequence WHSAGTYRIG…LAAVQMGLIY (151 aa). His-92 functions as the Proton acceptor in the catalytic mechanism. The segment at residues 241–267 is a cross-link (tryptophyl-tyrosyl-methioninium (Tyr-Met) (with W-91)); sequence YVNPEGPDGNPDPLAAAHDIRESFGRM. His-282 provides a ligand contact to heme b.

The protein belongs to the peroxidase family. Peroxidase/catalase subfamily. As to quaternary structure, homodimer or homotetramer. Heme b is required as a cofactor. Formation of the three residue Trp-Tyr-Met cross-link is important for the catalase, but not the peroxidase activity of the enzyme.

The catalysed reaction is H2O2 + AH2 = A + 2 H2O. It catalyses the reaction 2 H2O2 = O2 + 2 H2O. Bifunctional enzyme with both catalase and broad-spectrum peroxidase activity. In Cupriavidus necator (strain ATCC 17699 / DSM 428 / KCTC 22496 / NCIMB 10442 / H16 / Stanier 337) (Ralstonia eutropha), this protein is Catalase-peroxidase.